We begin with the raw amino-acid sequence, 117 residues long: Immunoglobulin heavy variable 3-11 (117 aa).

Residues 1–19 form the signal peptide; that stretch reads MEFGLSWVFLVAIIKGVQC. A Pyrrolidone carboxylic acid modification is found at Gln20. The segment at 20–44 is framework-1; the sequence is QVQLVESGGGLVKPGGSLRLSCAAS. The Ig-like domain maps to 20 to 117; sequence QVQLVESGGG…EDTAVYYCAR (98 aa). Cys41 and Cys115 are oxidised to a cystine. Positions 45–52 are complementarity-determining-1; the sequence is GFTFSDYY. The interval 53-69 is framework-2; it reads MSWIRQAPGKGLEWVSY. A complementarity-determining-2 region spans residues 70-77; it reads ISSSSSYT. The interval 78–115 is framework-3; the sequence is NYADSVKGRFTISRDNAKNSLYLQMNSLRAEDTAVYYC. The segment at 116–117 is complementarity-determining-3; it reads AR.

Immunoglobulins are composed of two identical heavy chains and two identical light chains; disulfide-linked.

The protein localises to the secreted. Its subcellular location is the cell membrane. Functionally, v region of the variable domain of immunoglobulin heavy chains that participates in the antigen recognition. Immunoglobulins, also known as antibodies, are membrane-bound or secreted glycoproteins produced by B lymphocytes. In the recognition phase of humoral immunity, the membrane-bound immunoglobulins serve as receptors which, upon binding of a specific antigen, trigger the clonal expansion and differentiation of B lymphocytes into immunoglobulins-secreting plasma cells. Secreted immunoglobulins mediate the effector phase of humoral immunity, which results in the elimination of bound antigens. The antigen binding site is formed by the variable domain of one heavy chain, together with that of its associated light chain. Thus, each immunoglobulin has two antigen binding sites with remarkable affinity for a particular antigen. The variable domains are assembled by a process called V-(D)-J rearrangement and can then be subjected to somatic hypermutations which, after exposure to antigen and selection, allow affinity maturation for a particular antigen. This chain is Immunoglobulin heavy variable 3-11, found in Homo sapiens (Human).